We begin with the raw amino-acid sequence, 343 residues long: Mating-type protein MAT-2 (343 aa).

2 disordered regions span residues 98–117 (RSPQ…SEQT) and 177–223 (KKPW…AAMT). The segment covering 99–117 (SPQVVSSPQSAQTSPSEQT) has biased composition (low complexity). A DNA-binding region (HMG box) is located at residues 131–199 (APRPMNCWII…EHLRQHPNYK (69 aa)). Basic residues predominate over residues 206–218 (GEKKKRQSRKSKR).

It localises to the nucleus. The sequence is that of Mating-type protein MAT-2 (MAT2) from Cochliobolus heterostrophus (Southern corn leaf blight fungus).